Here is a 786-residue protein sequence, read N- to C-terminus: Protein translocase subunit SecA 1 (786 aa).

ATP is bound by residues Gln85, 103–107 (GEGKT), and Asp491.

The protein belongs to the SecA family. Monomer and homodimer. Part of the essential Sec protein translocation apparatus which comprises SecA, SecYEG and auxiliary proteins SecDF. Other proteins may also be involved.

It is found in the cell membrane. The protein resides in the cytoplasm. The catalysed reaction is ATP + H2O + cellular proteinSide 1 = ADP + phosphate + cellular proteinSide 2.. In terms of biological role, part of the Sec protein translocase complex. Interacts with the SecYEG preprotein conducting channel. Has a central role in coupling the hydrolysis of ATP to the transfer of proteins into and across the cell membrane, serving as an ATP-driven molecular motor driving the stepwise translocation of polypeptide chains across the membrane. The protein is Protein translocase subunit SecA 1 of Pediococcus pentosaceus (strain ATCC 25745 / CCUG 21536 / LMG 10740 / 183-1w).